The chain runs to 197 residues: Negative modulator of initiation of replication (197 aa).

Interaction with DNA regions lie at residues 100 to 101 (AV), 129 to 133 (RTRVY), and 163 to 169 (NTNSGRK).

It belongs to the SeqA family. Homodimer. Polymerizes to form helical filaments.

It localises to the cytoplasm. Functionally, negative regulator of replication initiation, which contributes to regulation of DNA replication and ensures that replication initiation occurs exactly once per chromosome per cell cycle. Binds to pairs of hemimethylated GATC sequences in the oriC region, thus preventing assembly of replication proteins and re-initiation at newly replicated origins. Repression is relieved when the region becomes fully methylated. The chain is Negative modulator of initiation of replication from Haemophilus influenzae (strain ATCC 51907 / DSM 11121 / KW20 / Rd).